We begin with the raw amino-acid sequence, 101 residues long: Enhancer of yellow 2 transcription factor (101 aa).

The protein belongs to the ENY2 family. In terms of assembly, component of the nuclear pore complex (NPC)-associated AMEX complex (anchoring and mRNA export complex), composed of at least e(y)2 and xmas-2. Component of the SAGA transcription coactivator-HAT complexes, at least composed of Ada2b, e(y)2, Pcaf/Gcn5, Taf10 and Nipped-A/Trrap. Within the SAGA complex, e(y)2, Sgf11, and not/nonstop form an additional subcomplex of SAGA called the DUB module (deubiquitination module). Component of the THO complex, composed of at least e(y)2, HPR1, THO2, THOC5, THOC6 and THOC7. Interacts with e(y)1. Interacts with su(Hw) (via zinc fingers). Interacts with xmas-2; required for localization to the nuclear periphery. Interacts with the nuclear pore complex (NPC).

The protein resides in the nucleus. Its subcellular location is the nucleoplasm. It localises to the cytoplasm. Functionally, involved in mRNA export coupled transcription activation by association with both the AMEX and the SAGA complexes. The SAGA complex is a multiprotein complex that activates transcription by remodeling chromatin and mediating histone acetylation and deubiquitination. Within the SAGA complex, participates in a subcomplex that specifically deubiquitinates histone H2B. The SAGA complex is recruited to specific gene promoters by activators, where it is required for transcription. Required for nuclear receptor-mediated transactivation. Involved in transcription elongation by recruiting the THO complex onto nascent mRNA. The AMEX complex functions in docking export-competent ribonucleoprotein particles (mRNPs) to the nuclear entrance of the nuclear pore complex (nuclear basket). AMEX participates in mRNA export and accurate chromatin positioning in the nucleus by tethering genes to the nuclear periphery. This is Enhancer of yellow 2 transcription factor from Drosophila yakuba (Fruit fly).